A 374-amino-acid chain; its full sequence is Chaperone protein DnaJ (374 aa).

The J domain maps to 5–70 (DYYEVLGLEK…DKKANYDRFG (66 aa)). The segment at 137 to 219 (GVEKSINITR…CHGAGHVRKK (83 aa)) adopts a CR-type zinc-finger fold. 8 residues coordinate Zn(2+): C150, C153, C167, C170, C193, C196, C207, and C210. CXXCXGXG motif repeat units follow at residues 150-157 (CETCGGTG), 167-174 (CDKCGGTG), 193-200 (CDKCGGRG), and 207-214 (CHECHGAG).

This sequence belongs to the DnaJ family. In terms of assembly, homodimer. The cofactor is Zn(2+).

It is found in the cytoplasm. Its function is as follows. Participates actively in the response to hyperosmotic and heat shock by preventing the aggregation of stress-denatured proteins and by disaggregating proteins, also in an autonomous, DnaK-independent fashion. Unfolded proteins bind initially to DnaJ; upon interaction with the DnaJ-bound protein, DnaK hydrolyzes its bound ATP, resulting in the formation of a stable complex. GrpE releases ADP from DnaK; ATP binding to DnaK triggers the release of the substrate protein, thus completing the reaction cycle. Several rounds of ATP-dependent interactions between DnaJ, DnaK and GrpE are required for fully efficient folding. Also involved, together with DnaK and GrpE, in the DNA replication of plasmids through activation of initiation proteins. The sequence is that of Chaperone protein DnaJ from Clostridium acetobutylicum (strain ATCC 824 / DSM 792 / JCM 1419 / IAM 19013 / LMG 5710 / NBRC 13948 / NRRL B-527 / VKM B-1787 / 2291 / W).